We begin with the raw amino-acid sequence, 301 residues long: MGIRPPPGERSPAAVLSFGVVNLDKPPGPSAHQVSAWIRDLVGVEKAAHAGTLDPKVTGCLPVLTGTATRIAPALLEGFKEYVAVLELHDDPPRILPDVIEAFTGEIYQKPPKKSAVARRLRTRTVYDLDVLDVDGRQVLLRIRCESGTYIRKLCHDIGRALGTNAHMGHLRRSATTPFDDTDLVTLHDLADAVAWLRDTDDTEPPDAPADALRAAVQPAERALTHLPRLTIADSAAHEVATGAPVYAPGVIDTTALPTPPADGALVACYTAGGTAVCLGRLVGDPDADAGVVVALERVLV.

Residue aspartate 54 is the Nucleophile of the active site. One can recognise a PUA domain in the interval 227-301; that stretch reads LPRLTIADSA…VVVALERVLV (75 aa).

It belongs to the pseudouridine synthase TruB family. Type 2 subfamily.

It catalyses the reaction uridine(55) in tRNA = pseudouridine(55) in tRNA. Could be responsible for synthesis of pseudouridine from uracil-55 in the psi GC loop of transfer RNAs. This chain is Probable tRNA pseudouridine synthase B, found in Halobacterium salinarum (strain ATCC 29341 / DSM 671 / R1).